The following is a 754-amino-acid chain: 5-methyltetrahydropteroyltriglutamate--homocysteine methyltransferase (754 aa).

Residues 15 to 18 (RELK) and Lys-114 each bind 5-methyltetrahydropteroyltri-L-glutamate. L-homocysteine is bound by residues 430-432 (IGS) and Glu-483. L-methionine contacts are provided by residues 430–432 (IGS) and Glu-483. 5-methyltetrahydropteroyltri-L-glutamate is bound by residues 514–515 (RC) and Trp-560. Asp-598 provides a ligand contact to L-homocysteine. An L-methionine-binding site is contributed by Asp-598. Glu-604 provides a ligand contact to 5-methyltetrahydropteroyltri-L-glutamate. Positions 641, 643, and 665 each coordinate Zn(2+). His-694 serves as the catalytic Proton donor. Residue Cys-726 participates in Zn(2+) binding.

The protein belongs to the vitamin-B12 independent methionine synthase family. Zn(2+) is required as a cofactor.

The catalysed reaction is 5-methyltetrahydropteroyltri-L-glutamate + L-homocysteine = tetrahydropteroyltri-L-glutamate + L-methionine. It functions in the pathway amino-acid biosynthesis; L-methionine biosynthesis via de novo pathway; L-methionine from L-homocysteine (MetE route): step 1/1. In terms of biological role, catalyzes the transfer of a methyl group from 5-methyltetrahydrofolate to homocysteine resulting in methionine formation. The sequence is that of 5-methyltetrahydropteroyltriglutamate--homocysteine methyltransferase from Campylobacter jejuni (strain RM1221).